The primary structure comprises 513 residues: MQLNSTEISDLIKQRIEQFNVVSEARNEGTIVAVSDGIIRIHGLADVMQGEMIELPGNRFAIALNLERDSVGAVVMGPYANLAEGDKVKTTGRILEVPVGRGLLGRVVNTLGEPIDGKGPLEHDGFSPVEVIAPGVIERKSVDQPVQTGYKAVDSMIPIGRGQRELIIGDRQIGKTALAIDAIINQKDTGIKCVYVAVGQKASTIANVVRKLDEHGALANTIVVVATASEAAALQYLAPYSGCSMGEYFRDRGEDSLIVYDDLSKQAVAYRQISLLLKRPPGREAYPGDVFYLHSRLLERASRVNAEYVEKFTKGEVKGQTGSLTALPIIETQAGDVSAFVPTNVISITDGQIFLETDLFNSGLRPAVNPGISVSRVGGAAQTKIIKKLSGGIRSALAQYRELAAFSQFASDLDDATRAQLEHGERVTELMKQKQYAPMSVANQAVSIFSAEKGYLKSVELNKIGDFEASLLSFMNSEHADLMKTINDTGDYNADIEGELKAGLDKFVETQTW.

169–176 contacts ATP; it reads GDRQIGKT.

This sequence belongs to the ATPase alpha/beta chains family. F-type ATPases have 2 components, CF(1) - the catalytic core - and CF(0) - the membrane proton channel. CF(1) has five subunits: alpha(3), beta(3), gamma(1), delta(1), epsilon(1). CF(0) has three main subunits: a(1), b(2) and c(9-12). The alpha and beta chains form an alternating ring which encloses part of the gamma chain. CF(1) is attached to CF(0) by a central stalk formed by the gamma and epsilon chains, while a peripheral stalk is formed by the delta and b chains.

Its subcellular location is the cell inner membrane. It catalyses the reaction ATP + H2O + 4 H(+)(in) = ADP + phosphate + 5 H(+)(out). Its function is as follows. Produces ATP from ADP in the presence of a proton gradient across the membrane. The alpha chain is a regulatory subunit. This chain is ATP synthase subunit alpha, found in Shewanella halifaxensis (strain HAW-EB4).